The primary structure comprises 193 residues: dCTP deaminase (193 aa).

Residues 110-115, aspartate 128, 136-138, tyrosine 171, lysine 178, and glutamine 182 contribute to the dCTP site; these read RSSLAR and VLE. Glutamate 138 acts as the Proton donor/acceptor in catalysis.

Belongs to the dCTP deaminase family. Homotrimer.

It catalyses the reaction dCTP + H2O + H(+) = dUTP + NH4(+). Its pathway is pyrimidine metabolism; dUMP biosynthesis; dUMP from dCTP (dUTP route): step 1/2. Its function is as follows. Catalyzes the deamination of dCTP to dUTP. The polypeptide is dCTP deaminase (Aeromonas hydrophila subsp. hydrophila (strain ATCC 7966 / DSM 30187 / BCRC 13018 / CCUG 14551 / JCM 1027 / KCTC 2358 / NCIMB 9240 / NCTC 8049)).